Consider the following 151-residue polypeptide: Nucleoside diphosphate kinase (151 aa).

Lys10, Phe58, Arg86, Thr92, Arg103, and Asn113 together coordinate ATP. The active-site Pros-phosphohistidine intermediate is the His116.

This sequence belongs to the NDK family. In terms of assembly, homotetramer. The cofactor is Mg(2+).

The protein localises to the cytoplasm. The catalysed reaction is dZDP + ATP = dZTP + ADP. The enzyme catalyses a 2'-deoxyribonucleoside 5'-diphosphate + ATP = a 2'-deoxyribonucleoside 5'-triphosphate + ADP. It carries out the reaction a ribonucleoside 5'-diphosphate + ATP = a ribonucleoside 5'-triphosphate + ADP. The protein operates within purine metabolism. In terms of biological role, major role in the synthesis of nucleoside triphosphates other than ATP. The ATP gamma phosphate is transferred to the NDP beta phosphate via a ping-pong mechanism, using a phosphorylated active-site intermediate. (Microbial infection) Catalyzes the phosphorylation of dZDP to dZTP, when the bacterium is infected by a phage that produces the substrate for the synthesis of dZTP (2- amino-2'-deoxyadenosine 5'-triphosphate), which is then used by the phage as a DNA polymerase substrate. This chain is Nucleoside diphosphate kinase, found in Synechococcus sp. (strain CC9902).